The chain runs to 288 residues: Large ribosomal subunit protein uL2 (288 aa).

Disordered stretches follow at residues 1–46 (MAIH…RNVY) and 226–288 (MVMN…RGKK). Gly residues predominate over residues 235–248 (NGGGQGKSKGGGGR). The segment covering 279 to 288 (HNGRKPRGKK) has biased composition (basic residues).

It belongs to the universal ribosomal protein uL2 family. Part of the 50S ribosomal subunit. Forms a bridge to the 30S subunit in the 70S ribosome.

One of the primary rRNA binding proteins. Required for association of the 30S and 50S subunits to form the 70S ribosome, for tRNA binding and peptide bond formation. It has been suggested to have peptidyltransferase activity; this is somewhat controversial. Makes several contacts with the 16S rRNA in the 70S ribosome. This chain is Large ribosomal subunit protein uL2, found in Opitutus terrae (strain DSM 11246 / JCM 15787 / PB90-1).